The chain runs to 288 residues: Acetylglutamate kinase (288 aa).

Substrate-binding positions include 66-67 (GG), Arg88, and Asn182.

Belongs to the acetylglutamate kinase family. ArgB subfamily.

The protein resides in the cytoplasm. The enzyme catalyses N-acetyl-L-glutamate + ATP = N-acetyl-L-glutamyl 5-phosphate + ADP. It functions in the pathway amino-acid biosynthesis; L-arginine biosynthesis; N(2)-acetyl-L-ornithine from L-glutamate: step 2/4. In terms of biological role, catalyzes the ATP-dependent phosphorylation of N-acetyl-L-glutamate. The polypeptide is Acetylglutamate kinase (Brachyspira hyodysenteriae (strain ATCC 49526 / WA1)).